The primary structure comprises 273 residues: Putative pyruvate, phosphate dikinase regulatory protein (273 aa).

Residue 149-156 (GPSRTSKT) participates in ADP binding.

Belongs to the pyruvate, phosphate/water dikinase regulatory protein family. PDRP subfamily.

The enzyme catalyses N(tele)-phospho-L-histidyl/L-threonyl-[pyruvate, phosphate dikinase] + ADP = N(tele)-phospho-L-histidyl/O-phospho-L-threonyl-[pyruvate, phosphate dikinase] + AMP + H(+). The catalysed reaction is N(tele)-phospho-L-histidyl/O-phospho-L-threonyl-[pyruvate, phosphate dikinase] + phosphate + H(+) = N(tele)-phospho-L-histidyl/L-threonyl-[pyruvate, phosphate dikinase] + diphosphate. Bifunctional serine/threonine kinase and phosphorylase involved in the regulation of the pyruvate, phosphate dikinase (PPDK) by catalyzing its phosphorylation/dephosphorylation. The protein is Putative pyruvate, phosphate dikinase regulatory protein of Rickettsia africae (strain ESF-5).